Reading from the N-terminus, the 1298-residue chain is Activating molecule in BECN1-regulated autophagy protein 1 (1298 aa).

The tract at residues 1 to 22 is interaction with DDB1; the sequence is MKVVPEKNAVRILWGRERGARA. Residue K45 forms a Glycyl lysine isopeptide (Lys-Gly) (interchain with G-Cter in ubiquitin) linkage. 3 WD repeats span residues 51 to 90, 93 to 133, and 135 to 175; these read DSPRSTFLLAFSPDRTLLASTHVNHNIYITEVKTGKCVHS, GHRR…ESWF, and DSNN…AVVK. The residue at position 52 (S52) is a Phosphoserine; by MTOR. Over residues 254–266 the composition is skewed to polar residues; that stretch reads IQVGEQSTVQDSA. Residues 254–284 form a disordered region; the sequence is IQVGEQSTVQDSATPSPPPPPPQPSTERPRT. Residues 268–277 are compositionally biased toward pro residues; the sequence is PSPPPPPPQP. Positions 275–281 match the PxP motif 1 motif; it reads PQPSTER. A Phosphoserine modification is found at S328. Positions 343–413 are disordered; it reads FVQTEPFHPP…SRYHREIAPG (71 aa). Residues 354 to 385 show a composition bias toward polar residues; that stretch reads QASSTQQDQGLLNRPSAFSTVQSSTAGNTLRN. Residues S394 and S443 each carry the phosphoserine modification. Composition is skewed to polar residues over residues 458-467, 547-561, and 590-601; these read SQASVYTSAT, HQPTPHSSENNSNLS, and NYSSGEASSSWQ. Disordered regions lie at residues 458-494, 538-561, 590-690, and 747-796; these read SQASVYTSATEGRGFPASGLATESDGGNGSSQNNSGS, IESERPGPSHQPTPHSSENNSNLS, NYSS…DSLR, and RYQQ…NARM. 2 stretches are compositionally biased toward low complexity: residues 602 to 614 and 628 to 639; these read VPSSFESVPSSGS and SSSRLELSSSAS. Phosphoserine is present on residues S635 and S639. Positions 661–674 are enriched in polar residues; it reads YTQSSRSGTVSQEA. Residue R747 is modified to Asymmetric dimethylarginine. The span at 772–781 shows a compositional bias: acidic residues; that stretch reads TDLEFEDFED. S1043 carries the phosphoserine; by IKKA modification. Positions 1043-1052 match the LIR motif; the sequence is SGVEYYWDQL. Residues 1060-1075 are compositionally biased toward polar residues; the sequence is HSNSRSSERPGTSRAT. The segment at 1060 to 1079 is disordered; sequence HSNSRSSERPGTSRATWRTD. 2 short sequence motifs (TQT motif) span residues 1104–1106 and 1116–1118; these read TQT. Disordered stretches follow at residues 1112-1143, 1190-1214, and 1227-1298; these read QNAETQTEREVPEPGTAASGPGEGEGSEYGAS, RSSQTGTEPGAAHTSSPQPSTSRGL, and SPRT…PRNR. Residues 1191-1212 are compositionally biased toward polar residues; sequence SSQTGTEPGAAHTSSPQPSTSR. Phosphoserine is present on S1205. The short motif at 1206-1212 is the PxP motif 2 element; that stretch reads PQPSTSR.

This sequence belongs to the WD repeat AMBRA1 family. In terms of assembly, component of the DCX(AMBRA1) E3 ubiquitin ligase complex, also named CRL4(AMBRA1), at least composed of CUL4 (CUL4A or CUL4B), DDB1, AMBRA1 and RBX1. Interacts with BECN1. Probably forms a complex with BECN1 and PIK3C3. Interacts with BECN2. Interacts with BCL2; leading to prevent interaction with BCN1 and autophagy, interaction is disrupted upon autophagy induction. Interacts with ULK1. Interacts (via PxP motifs) with PPP2CA; enhancing interaction between PPP2CA and MYC or FOXO3. Forms a complex with PPP2CA and BECN1; AMBRA1 and BECN1 components of the complex regulate MYC stability via different pathways. Interacts (TQT motifs) with DYNLL1 and DYNLL2; tethering AMBRA1 and the BECN1-PIK3C3 complex in absence of autophagy. Interacts with TRAF6; interaction is required to mediate 'Lys-63'-linked ubiquitination of ULK1. Interacts with TRIM32; promoting activation of ULK1 by TRIM32 via unanchored 'Lys-63'-linked polyubiquitin chains. Interacts with PRKN. Interacts (via LIR motif) with LC3 (MAP1LC3A, MAP1LC3B or MAP1LC3C). Interacts with HUWE1. Interacts with PTK2/FAK. Interacts with SRC; required for SRC trafficking to autophagosomes. Phosphorylation at Ser-52 by MTOR inhibits its ability to regulate autophagy and mediate ubiquitination of ULK1. Phosphorylation by ULK1 in response to autophagy induction abolishes interaction with DYNLL1 and DYNLL2, releasing AMBRA1 from the cytoskeletal docking site to induce autophagosome nucleation. Phosphorylation by MTOR inhibits interaction with PPP2CA and subsequent dephosphorylation of MYC. Phosphorylation at Ser-1043 by CHUK/IKKA promotes its interaction with ATG8 family proteins GABARAP and MAP1LC3B and its mitophagic activity. In terms of processing, ubiquitinated by RNF2 via 'Lys-48'-linkage in unstressed cells, leading to its degradation by the proteasome. Induction of autophagy promotes stabilization via interaction with CUL4 (CUL4A or CUL4B) and DDB1. Upon prolonged starvation, ubiquitinated and degraded, terminating the autophagy response. Post-translationally, undergoes proteolytic processing by caspase-6 (CASP6), caspase-7 (CASP7) and caspase-8 (CASP8) during apoptosis, resulting in the dismantling of the autophagic machinery and the accomplishment of the programmed cell death program. Also cleaved by calpains during apoptosis, which mediate a complete proteolytic degradation.

Its subcellular location is the endoplasmic reticulum. The protein resides in the cytoplasm. The protein localises to the cytoskeleton. It is found in the cytoplasmic vesicle. It localises to the autophagosome. Its subcellular location is the mitochondrion. The protein resides in the cytosol. The protein localises to the nucleus. It is found in the cell junction. It localises to the focal adhesion. It functions in the pathway protein modification; protein ubiquitination. In terms of biological role, substrate-recognition component of a DCX (DDB1-CUL4-X-box) E3 ubiquitin-protein ligase complex involved in cell cycle control and autophagy. The DCX(AMBRA1) complex specifically mediates the polyubiquitination of target proteins such as BECN1, CCND1, CCND2, CCND3, ELOC and ULK1. Acts as an upstream master regulator of the transition from G1 to S cell phase: AMBRA1 specifically recognizes and binds phosphorylated cyclin-D (CCND1, CCND2 and CCND3), leading to cyclin-D ubiquitination by the DCX(AMBRA1) complex and subsequent degradation. By controlling the transition from G1 to S phase and cyclin-D degradation, AMBRA1 acts as a tumor suppressor that promotes genomic integrity during DNA replication and counteracts developmental abnormalities and tumor growth. AMBRA1 also regulates the cell cycle by promoting MYC dephosphorylation and degradation independently of the DCX(AMBRA1) complex: acts via interaction with the catalytic subunit of protein phosphatase 2A (PPP2CA), which enhances interaction between PPP2CA and MYC, leading to MYC dephosphorylation and degradation. Acts as a regulator of Cul5-RING (CRL5) E3 ubiquitin-protein ligase complexes by mediating ubiquitination and degradation of Elongin-C (ELOC) component of CRL5 complexes. Acts as a key regulator of autophagy by modulating the BECN1-PIK3C3 complex: controls protein turnover during neuronal development, and regulates normal cell survival and proliferation. In normal conditions, AMBRA1 is tethered to the cytoskeleton via interaction with dyneins DYNLL1 and DYNLL2. Upon autophagy induction, AMBRA1 is released from the cytoskeletal docking site to induce autophagosome nucleation by mediating ubiquitination of proteins involved in autophagy. The DCX(AMBRA1) complex mediates 'Lys-63'-linked ubiquitination of BECN1, increasing the association between BECN1 and PIK3C3 to promote PIK3C3 activity. In collaboration with TRAF6, AMBRA1 mediates 'Lys-63'-linked ubiquitination of ULK1 following autophagy induction, promoting ULK1 stability and kinase activity. Also activates ULK1 via interaction with TRIM32: TRIM32 stimulates ULK1 through unanchored 'Lys-63'-linked polyubiquitin chains. Also acts as an activator of mitophagy via interaction with PRKN and LC3 proteins (MAP1LC3A, MAP1LC3B or MAP1LC3C); possibly by bringing damaged mitochondria onto autophagosomes. Also activates mitophagy by acting as a cofactor for HUWE1; acts by promoting HUWE1-mediated ubiquitination of MFN2. AMBRA1 is also involved in regulatory T-cells (Treg) differentiation by promoting FOXO3 dephosphorylation independently of the DCX(AMBRA1) complex: acts via interaction with PPP2CA, which enhances interaction between PPP2CA and FOXO3, leading to FOXO3 dephosphorylation and stabilization. May act as a regulator of intracellular trafficking, regulating the localization of active PTK2/FAK and SRC. Also involved in transcription regulation by acting as a scaffold for protein complexes at chromatin. The chain is Activating molecule in BECN1-regulated autophagy protein 1 from Homo sapiens (Human).